The following is a 419-amino-acid chain: L-rhamnose isomerase (419 aa).

Residues His262, Asp294, and Asp296 each coordinate Mn(2+).

It belongs to the rhamnose isomerase family. Homotetramer. Mn(2+) serves as cofactor.

The protein localises to the cytoplasm. The catalysed reaction is L-rhamnopyranose = L-rhamnulose. It functions in the pathway carbohydrate degradation; L-rhamnose degradation; glycerone phosphate from L-rhamnose: step 1/3. Functionally, catalyzes the interconversion of L-rhamnose and L-rhamnulose. This is L-rhamnose isomerase from Escherichia coli (strain 55989 / EAEC).